Reading from the N-terminus, the 163-residue chain is Endoribonuclease YbeY (163 aa).

Zn(2+)-binding residues include His-126, His-130, and His-136.

It belongs to the endoribonuclease YbeY family. The cofactor is Zn(2+).

It localises to the cytoplasm. Its function is as follows. Single strand-specific metallo-endoribonuclease involved in late-stage 70S ribosome quality control and in maturation of the 3' terminus of the 16S rRNA. In Chelativorans sp. (strain BNC1), this protein is Endoribonuclease YbeY.